Consider the following 302-residue polypeptide: Ribosomal RNA small subunit methyltransferase A (302 aa).

The S-adenosyl-L-methionine site is built by His-15, Leu-17, Gly-42, Glu-64, Asp-89, and Asn-109. The segment at 275–302 (DAASADGHDHGDGSGQGESSPGGARDQI) is disordered.

It belongs to the class I-like SAM-binding methyltransferase superfamily. rRNA adenine N(6)-methyltransferase family. RsmA subfamily.

Its subcellular location is the cytoplasm. It carries out the reaction adenosine(1518)/adenosine(1519) in 16S rRNA + 4 S-adenosyl-L-methionine = N(6)-dimethyladenosine(1518)/N(6)-dimethyladenosine(1519) in 16S rRNA + 4 S-adenosyl-L-homocysteine + 4 H(+). Functionally, specifically dimethylates two adjacent adenosines (A1518 and A1519) in the loop of a conserved hairpin near the 3'-end of 16S rRNA in the 30S particle. May play a critical role in biogenesis of 30S subunits. This chain is Ribosomal RNA small subunit methyltransferase A, found in Parasynechococcus marenigrum (strain WH8102).